Reading from the N-terminus, the 386-residue chain is Succinate--CoA ligase [ADP-forming] subunit beta (386 aa).

An ATP-grasp domain is found at 9–244 (KEIFRKYGVP…LAEEEPREIQ (236 aa)). ATP is bound by residues K46, 53–55 (GRG), E99, L102, and E107. Mg(2+) is bound by residues N199 and D213. Substrate-binding positions include N264 and 321-323 (GIM).

Belongs to the succinate/malate CoA ligase beta subunit family. Heterotetramer of two alpha and two beta subunits. It depends on Mg(2+) as a cofactor.

The catalysed reaction is succinate + ATP + CoA = succinyl-CoA + ADP + phosphate. It carries out the reaction GTP + succinate + CoA = succinyl-CoA + GDP + phosphate. The protein operates within carbohydrate metabolism; tricarboxylic acid cycle; succinate from succinyl-CoA (ligase route): step 1/1. Its function is as follows. Succinyl-CoA synthetase functions in the citric acid cycle (TCA), coupling the hydrolysis of succinyl-CoA to the synthesis of either ATP or GTP and thus represents the only step of substrate-level phosphorylation in the TCA. The beta subunit provides nucleotide specificity of the enzyme and binds the substrate succinate, while the binding sites for coenzyme A and phosphate are found in the alpha subunit. The polypeptide is Succinate--CoA ligase [ADP-forming] subunit beta (Myxococcus xanthus (strain DK1622)).